The primary structure comprises 315 residues: ATP synthase gamma chain (315 aa).

Belongs to the ATPase gamma chain family. As to quaternary structure, F-type ATPases have 2 components, CF(1) - the catalytic core - and CF(0) - the membrane proton channel. CF(1) has five subunits: alpha(3), beta(3), gamma(1), delta(1), epsilon(1). CF(0) has three main subunits: a, b and c.

It localises to the cellular thylakoid membrane. Functionally, produces ATP from ADP in the presence of a proton gradient across the membrane. The gamma chain is believed to be important in regulating ATPase activity and the flow of protons through the CF(0) complex. In Synechococcus sp. (strain RCC307), this protein is ATP synthase gamma chain.